A 65-amino-acid polypeptide reads, in one-letter code: Large ribosomal subunit protein bL35 (65 aa).

It belongs to the bacterial ribosomal protein bL35 family.

In Nitrosomonas eutropha (strain DSM 101675 / C91 / Nm57), this protein is Large ribosomal subunit protein bL35.